The primary structure comprises 185 residues: uncharacterized protein (185 aa).

Helical transmembrane passes span 32 to 52 (LIFVPDSPTATFFFLFVLLAF), 66 to 86 (LVTLVKYGLWAVAMNFLVLAV), and 155 to 175 (IGYGTFWLSIFSIALAYFLVV).

The protein localises to the cell membrane. This is an uncharacterized protein from Bacillus subtilis (strain 168).